We begin with the raw amino-acid sequence, 25 residues long: Histone H4 (25 aa).

Over residues 1–14 (MSGRGKGGKGLGKG) the composition is skewed to gly residues. The tract at residues 1–25 (MSGRGKGGKGLGKGGAKRHRKVLRD) is disordered. Ser-2 is subject to N-acetylserine. N6-acetyllysine occurs at positions 6, 9, 13, 17, and 21. The segment covering 15–25 (GAKRHRKVLRD) has biased composition (basic residues). The DNA-binding element occupies 17–21 (KRHRK).

This sequence belongs to the histone H4 family. In terms of assembly, the nucleosome is a histone octamer containing two molecules each of H2A, H2B, H3 and H4 assembled in one H3-H4 heterotetramer and two H2A-H2B heterodimers. The octamer wraps approximately 147 bp of DNA.

It localises to the nucleus. Its subcellular location is the chromosome. Core component of nucleosome. Nucleosomes wrap and compact DNA into chromatin, limiting DNA accessibility to the cellular machineries which require DNA as a template. Histones thereby play a central role in transcription regulation, DNA repair, DNA replication and chromosomal stability. DNA accessibility is regulated via a complex set of post-translational modifications of histones, also called histone code, and nucleosome remodeling. This chain is Histone H4, found in Medicago sativa (Alfalfa).